The sequence spans 310 residues: Putative S-adenosyl-L-methionine-dependent methyltransferase MSMEG_1888/MSMEI_1848 (310 aa).

S-adenosyl-L-methionine is bound by residues aspartate 128 and 157-158 (DL).

Belongs to the UPF0677 family.

In terms of biological role, exhibits S-adenosyl-L-methionine-dependent methyltransferase activity. This is Putative S-adenosyl-L-methionine-dependent methyltransferase MSMEG_1888/MSMEI_1848 from Mycolicibacterium smegmatis (strain ATCC 700084 / mc(2)155) (Mycobacterium smegmatis).